Here is a 394-residue protein sequence, read N- to C-terminus: Flavohemoprotein (394 aa).

A Globin domain is found at 1–136 (MISQQTIDIV…LANVFITREE (136 aa)). His-85 contacts heme b. Active-site charge relay system residues include Tyr-95 and Glu-135. A reductase region spans residues 147–394 (GGWRGTREFT…YECFGPHKVL (248 aa)). The region spanning 150 to 255 (RGTREFTLIE…AAPAGDFFLD (106 aa)) is the FAD-binding FR-type domain. FAD is bound by residues Tyr-188 and 204-207 (RQYS). 268 to 273 (GVGLTP) contributes to the NADP(+) binding site. 387 to 390 (CFGP) is a binding site for FAD.

This sequence belongs to the globin family. Two-domain flavohemoproteins subfamily. It in the C-terminal section; belongs to the flavoprotein pyridine nucleotide cytochrome reductase family. Heme b serves as cofactor. Requires FAD as cofactor.

The enzyme catalyses 2 nitric oxide + NADPH + 2 O2 = 2 nitrate + NADP(+) + H(+). It catalyses the reaction 2 nitric oxide + NADH + 2 O2 = 2 nitrate + NAD(+) + H(+). Is involved in NO detoxification in an aerobic process, termed nitric oxide dioxygenase (NOD) reaction that utilizes O(2) and NAD(P)H to convert NO to nitrate, which protects the bacterium from various noxious nitrogen compounds. Therefore, plays a central role in the inducible response to nitrosative stress. The chain is Flavohemoprotein from Photobacterium profundum (strain SS9).